The chain runs to 169 residues: E1B protein, small T-antigen (169 aa).

Belongs to the adenoviridae E1B 19 kDa protein family.

The chain is E1B protein, small T-antigen from Canine adenovirus serotype 1 (strain CLL) (CAdV-1).